Consider the following 127-residue polypeptide: Apolipoprotein C-IV (127 aa).

Positions 1–27 (MSLLRNRLQDLPALCLCVLVLACIGAC) are cleaved as a signal peptide.

It belongs to the apolipoprotein C4 family.

It localises to the secreted. May participate in lipoprotein metabolism. This is Apolipoprotein C-IV (APOC4) from Chlorocebus sabaeus (Green monkey).